We begin with the raw amino-acid sequence, 210 residues long: Imidazole glycerol phosphate synthase subunit HisH (210 aa).

The 208-residue stretch at 3–210 folds into the Glutamine amidotransferase type-1 domain; sequence KVALLDYGSG…QLLRNWIDLL (208 aa). The active-site Nucleophile is Cys-81. Residues His-191 and Glu-193 contribute to the active site.

As to quaternary structure, heterodimer of HisH and HisF.

It localises to the cytoplasm. The enzyme catalyses 5-[(5-phospho-1-deoxy-D-ribulos-1-ylimino)methylamino]-1-(5-phospho-beta-D-ribosyl)imidazole-4-carboxamide + L-glutamine = D-erythro-1-(imidazol-4-yl)glycerol 3-phosphate + 5-amino-1-(5-phospho-beta-D-ribosyl)imidazole-4-carboxamide + L-glutamate + H(+). The catalysed reaction is L-glutamine + H2O = L-glutamate + NH4(+). Its pathway is amino-acid biosynthesis; L-histidine biosynthesis; L-histidine from 5-phospho-alpha-D-ribose 1-diphosphate: step 5/9. Its function is as follows. IGPS catalyzes the conversion of PRFAR and glutamine to IGP, AICAR and glutamate. The HisH subunit catalyzes the hydrolysis of glutamine to glutamate and ammonia as part of the synthesis of IGP and AICAR. The resulting ammonia molecule is channeled to the active site of HisF. This is Imidazole glycerol phosphate synthase subunit HisH from Corynebacterium diphtheriae (strain ATCC 700971 / NCTC 13129 / Biotype gravis).